The chain runs to 248 residues: Zinc finger CCCH domain-containing protein 36 (248 aa).

2 disordered regions span residues 1–37 (MDTR…GLGS) and 87–110 (MQGS…VSNF). The C3H1-type 1 zinc-finger motif lies at 36 to 64 (GSKSKPCTKFFSTSGCPFGENCHFLHYVP). Gly residues predominate over residues 90-103 (SGNGGRFSGRGESG). Positions 113–177 (SATARFSVDA…EQISEASAMV (65 aa)) constitute a KH domain. The segment at 188–209 (AKKPPGGGLGGGGGMGSEGKPH) is disordered. A compositionally biased stretch (gly residues) spans 192-204 (PGGGLGGGGGMGS). The segment at 213 to 240 (NFKTKICERFSKGNCTFGDRCHFAHGEA) adopts a C3H1-type 2 zinc-finger fold.

The sequence is that of Zinc finger CCCH domain-containing protein 36 from Arabidopsis thaliana (Mouse-ear cress).